The primary structure comprises 289 residues: 33 kDa chaperonin (289 aa).

Disulfide bonds link Cys-225/Cys-227 and Cys-258/Cys-261.

Belongs to the HSP33 family. Post-translationally, under oxidizing conditions two disulfide bonds are formed involving the reactive cysteines. Under reducing conditions zinc is bound to the reactive cysteines and the protein is inactive.

The protein resides in the cytoplasm. Its function is as follows. Redox regulated molecular chaperone. Protects both thermally unfolding and oxidatively damaged proteins from irreversible aggregation. Plays an important role in the bacterial defense system toward oxidative stress. The polypeptide is 33 kDa chaperonin (Nitrosococcus oceani (strain ATCC 19707 / BCRC 17464 / JCM 30415 / NCIMB 11848 / C-107)).